The sequence spans 85 residues: UPF0291 protein SSA_1878 (85 aa).

The interval 58–85 (GNDVTPEKLRQVQREKGLHGRSLDDPES) is disordered. A compositionally biased stretch (basic and acidic residues) spans 62–85 (TPEKLRQVQREKGLHGRSLDDPES).

This sequence belongs to the UPF0291 family.

The protein resides in the cytoplasm. In Streptococcus sanguinis (strain SK36), this protein is UPF0291 protein SSA_1878.